The primary structure comprises 272 residues: MVFYKYSGSGNDFLITQSFKKKDFSNLAKQVCHRHEGFGADGLVIVLPSKDYDYEWDFYNSDGSKAGMCGNASRCVGLFAYQHAIAPKEHVFLAGKREISICIEEPNIIESNLGNYKILDTIPNLRCKKFFTNNSVLENILTFYLIDTGVPHLVGFVKNKEWLNSLNTLELRALRHAFNANINIAFIENEETIFLQTYERGVEDFTLACGTGMAAVFIAARLFYNAPKKATLIPKSNESLELSLKNDGIFYKGIVRYIGMSVLGSVFENGCF.

Asn-11 and Asn-60 together coordinate substrate. The Proton donor role is filled by Cys-69. Substrate is bound by residues 70–71 (GN), Asn-181, and 199–200 (ER). The Proton acceptor role is filled by Cys-209. Residue 210–211 (GT) participates in substrate binding.

It belongs to the diaminopimelate epimerase family. Homodimer.

It is found in the cytoplasm. The enzyme catalyses (2S,6S)-2,6-diaminopimelate = meso-2,6-diaminopimelate. It participates in amino-acid biosynthesis; L-lysine biosynthesis via DAP pathway; DL-2,6-diaminopimelate from LL-2,6-diaminopimelate: step 1/1. Catalyzes the stereoinversion of LL-2,6-diaminopimelate (L,L-DAP) to meso-diaminopimelate (meso-DAP), a precursor of L-lysine and an essential component of the bacterial peptidoglycan. This chain is Diaminopimelate epimerase, found in Helicobacter pylori (strain P12).